The primary structure comprises 449 residues: Elongation factor 1-alpha C (449 aa).

Residues K5–V234 enclose the tr-type G domain. The G1 stretch occupies residues G14–S21. G14–S21 serves as a coordination point for GTP. The residue at position 55 (K55) is an N6,N6-dimethyllysine. The interval G70 to D74 is G2. K79 carries the post-translational modification N6,N6,N6-trimethyllysine. The G3 stretch occupies residues D91 to G94. Residues D91–H95 and N153–D156 each bind GTP. A G4 region spans residues N153–D156. An N6,N6,N6-trimethyllysine modification is found at K187. The interval S194–W196 is G5. An N6-methyllysine modification is found at K265. Residues K310 and K400 each carry the N6,N6,N6-trimethyllysine modification.

The protein belongs to the TRAFAC class translation factor GTPase superfamily. Classic translation factor GTPase family. EF-Tu/EF-1A subfamily.

Its subcellular location is the cytoplasm. Functionally, this protein promotes the GTP-dependent binding of aminoacyl-tRNA to the A-site of ribosomes during protein biosynthesis. The chain is Elongation factor 1-alpha C (TEF-C) from Porphyra purpurea (Red seaweed).